The primary structure comprises 204 residues: Glutathione S-transferase GST-4.5 (204 aa).

The GST N-terminal domain maps to 1–77 (MKLYTKPGAC…YIADTAPLTG (77 aa)). Glutathione contacts are provided by residues Cys-10, Val-49, 61 to 62 (QN), and His-102. The region spanning 83–204 (TARSRAEINR…QAALQAEGLN (122 aa)) is the GST C-terminal domain.

The protein belongs to the GST superfamily. As to quaternary structure, homodimer.

The protein localises to the cytoplasm. The catalysed reaction is RX + glutathione = an S-substituted glutathione + a halide anion + H(+). Its function is as follows. Conjugation of reduced glutathione to a wide number of exogenous and endogenous hydrophobic electrophiles. This Xanthomonas campestris pv. campestris (strain ATCC 33913 / DSM 3586 / NCPPB 528 / LMG 568 / P 25) protein is Glutathione S-transferase GST-4.5 (gst).